The chain runs to 389 residues: Monomeric sarcosine oxidase (389 aa).

8 to 38 (DVIVVGAGSMGMAAGYYLSKQGVKTLLVDSF) serves as a coordination point for FAD. Cys-318 is modified (S-8alpha-FAD cysteine).

The protein belongs to the MSOX/MTOX family. MSOX subfamily. Monomer. It depends on FAD as a cofactor.

The protein localises to the cytoplasm. It catalyses the reaction sarcosine + O2 + H2O = formaldehyde + glycine + H2O2. Its function is as follows. Catalyzes the oxidative demethylation of sarcosine. This Arthrobacter sp. (strain TE1826) protein is Monomeric sarcosine oxidase (soxA).